A 163-amino-acid chain; its full sequence is Lipoprotein signal peptidase (163 aa).

4 helical membrane-spanning segments follow: residues Ala-9–Leu-29, Ile-42–Gly-62, Trp-67–Leu-87, and Ser-93–Ile-113. Residues Asp-123 and Asp-141 contribute to the active site. A helical membrane pass occupies residues Phe-137 to Leu-157.

Belongs to the peptidase A8 family.

It is found in the cell inner membrane. It carries out the reaction Release of signal peptides from bacterial membrane prolipoproteins. Hydrolyzes -Xaa-Yaa-Zaa-|-(S,diacylglyceryl)Cys-, in which Xaa is hydrophobic (preferably Leu), and Yaa (Ala or Ser) and Zaa (Gly or Ala) have small, neutral side chains.. It participates in protein modification; lipoprotein biosynthesis (signal peptide cleavage). In terms of biological role, this protein specifically catalyzes the removal of signal peptides from prolipoproteins. This Coxiella burnetii (strain Dugway 5J108-111) protein is Lipoprotein signal peptidase.